Consider the following 208-residue polypeptide: MAQLSAQRRMKLMALQLLLWQSALWSGREAVPLVTVSALPPSLPLPRSFLLKSLEQVRKIQASGSVLLEQLCATYKLCHPEELVLLGHSLGIPKASLSGCSSQALQQTQCLSQLHSGLCLYQGLLQALSGISPALAPTLDLLQLDVANFATTIWQQMENLGVAPTVQPTQSAMPAFTSAFQRRAGGVLAISYLQGFLETARLALHHLA.

Positions 1 to 30 (MAQLSAQRRMKLMALQLLLWQSALWSGREA) are cleaved as a signal peptide. 2 cysteine pairs are disulfide-bonded: Cys-72–Cys-78 and Cys-100–Cys-110. A glycan (O-linked (GalNAc...) threonine) is linked at Thr-169.

This sequence belongs to the IL-6 superfamily. As to quaternary structure, monomer. O-glycosylated.

The protein resides in the secreted. Granulocyte/macrophage colony-stimulating factors are cytokines that act in hematopoiesis by controlling the production, differentiation, and function of 2 related white cell populations of the blood, the granulocytes and the monocytes-macrophages. This CSF induces granulocytes. The protein is Granulocyte colony-stimulating factor (Csf3) of Mus musculus (Mouse).